Consider the following 207-residue polypeptide: Interferon kappa (207 aa).

An N-terminal signal peptide occupies residues 1–27; that stretch reads MSTKPDMIQKCLWLEILMGIFIAGTLS. 2 disulfides stabilise this stretch: C30–C128 and C59–C181. Residues 118–148 adopt a coiled-coil conformation; sequence LDQQAEYLNQCLEEDKNENEDMKEMKENEMK.

Belongs to the alpha/beta interferon family. As to expression, expressed in keratinocytes, monocytes and in resting dendritic cells.

It localises to the secreted. Functionally, may play a role in the regulation of immune cell function. Cytokine that imparts cellular protection against viral infection in a species-specific manner. Activates the interferon-stimulated response element signaling pathway. It is able to directly modulate cytokine release from monocytes and dendritic cells. Binds heparin. The sequence is that of Interferon kappa (IFNK) from Homo sapiens (Human).